The following is a 314-amino-acid chain: S-methyl-5'-thioadenosine phosphorylase (314 aa).

Residues S31, 73–74 (RH), and 106–107 (SA) each bind phosphate. M207 is a substrate binding site. Phosphate is bound at residue T208. Substrate is bound at residue 231–233 (DYD).

This sequence belongs to the PNP/MTAP phosphorylase family. MTAP subfamily. Homohexamer. Dimer of a homotrimer.

It carries out the reaction S-methyl-5'-thioadenosine + phosphate = 5-(methylsulfanyl)-alpha-D-ribose 1-phosphate + adenine. Its pathway is amino-acid biosynthesis; L-methionine biosynthesis via salvage pathway; S-methyl-5-thio-alpha-D-ribose 1-phosphate from S-methyl-5'-thioadenosine (phosphorylase route): step 1/1. Its function is as follows. Catalyzes the reversible phosphorylation of S-methyl-5'-thioadenosine (MTA) to adenine and 5-methylthioribose-1-phosphate. Involved in the breakdown of MTA, a major by-product of polyamine biosynthesis. Responsible for the first step in the methionine salvage pathway after MTA has been generated from S-adenosylmethionine. Has broad substrate specificity with 6-aminopurine nucleosides as preferred substrates. The sequence is that of S-methyl-5'-thioadenosine phosphorylase from Prochlorococcus marinus (strain SARG / CCMP1375 / SS120).